Consider the following 687-residue polypeptide: MTAQSLLQTTLFLLSLLFLVQGAHGRGHREDFRFCSQRNQTHISSLHYKFTPDLRISIENSEEALTVHAPFPEAHPASRSFPHPRGLYHFCLYWDRHAGRLHLLYGKHDFLLSDQASSLLCFQHQEESLAQGPPLFATSVTSWWSPQNISLPSASNFTFSFHSPPHTAAHNASVDMCELKRDLQLLSQFLKHPQKASRRPSATPASQQLQSLESKLTSVRFMGDTVSFEEDRVNATVWKLQPTAGLQDLHIHSRQEQEQSEILEYSVLLPRTLFQRTKGRRGEAEKRLLLVDFSSQALFQDKNSSQVLGEKVLGIVVQNTKVANLTEPVVLTFQHQPQPKNVTLQCVFWVEDPTLSNPGRWSSAGCETVRRETQTSCFCNHLTYFAVLMVSSVEVDAVHKHYLSLLSYVGCVVSALACVVTIAAYLCSRRKPRDYTIKVHMNLLLAVFLLDVSFLLSEPVALTGSQSGCRASAIFLHFSLLACLSWMGLEGYNLYRLVVEVFGTYIPGYLLKLSAMGWGFPIFLVTLVALVDVDNYGPIILAVHRTPESVIYPSMCWIRDSLVSYITNLGLFSLVFLFNMAMLGTMVVQILRLRPHTQKWSHVLTLLGLSLVLGLPWALIFFSFASGTFQLVVLYLFSIITSFQGFLIFLWYWSMRLQARGGPSPLKSNSDSARLPISTGSTSSSRI.

Positions 1–25 are cleaved as a signal peptide; the sequence is MTAQSLLQTTLFLLSLLFLVQGAHG. Residue 26–33 participates in heparin binding; that stretch reads RGHREDFR. At 26–402 the chain is on the extracellular side; the sequence is RGHREDFRFC…VEVDAVHKHY (377 aa). 2 disulfides stabilise this stretch: Cys35–Cys91 and Cys121–Cys177. Residues Asn39, Asn148, Asn156, and Asn171 are each glycosylated (N-linked (GlcNAc...) asparagine). 190–200 lines the heparin pocket; that stretch reads LKHPQKASRRP. Positions 224–395 constitute a GAIN-B domain; that stretch reads DTVSFEEDRV…AVLMVSSVEV (172 aa). Residues Asn234, Asn303, Asn324, and Asn341 are each glycosylated (N-linked (GlcNAc...) asparagine). 2 cysteine pairs are disulfide-bonded: Cys346-Cys377 and Cys366-Cys379. The interval 346-395 is GPS; the sequence is CVFWVEDPTLSNPGRWSSAGCETVRRETQTSCFCNHLTYFAVLMVSSVEV. The interval 384 to 397 is stachel; that stretch reads YFAVLMVSSVEVDA. A helical membrane pass occupies residues 403 to 423; the sequence is LSLLSYVGCVVSALACVVTIA. The Cytoplasmic segment spans residues 424–442; the sequence is AYLCSRRKPRDYTIKVHMN. Residues 443 to 463 form a helical membrane-spanning segment; that stretch reads LLLAVFLLDVSFLLSEPVALT. Over 464 to 470 the chain is Extracellular; it reads GSQSGCR. A helical membrane pass occupies residues 471–491; the sequence is ASAIFLHFSLLACLSWMGLEG. Topologically, residues 492 to 512 are cytoplasmic; it reads YNLYRLVVEVFGTYIPGYLLK. The helical transmembrane segment at 513–533 threads the bilayer; it reads LSAMGWGFPIFLVTLVALVDV. Residues 534 to 570 are Extracellular-facing; that stretch reads DNYGPIILAVHRTPESVIYPSMCWIRDSLVSYITNLG. A helical membrane pass occupies residues 571–591; the sequence is LFSLVFLFNMAMLGTMVVQIL. At 592 to 603 the chain is on the cytoplasmic side; that stretch reads RLRPHTQKWSHV. The chain crosses the membrane as a helical span at residues 604–624; the sequence is LTLLGLSLVLGLPWALIFFSF. The Extracellular portion of the chain corresponds to 625–630; the sequence is ASGTFQ. A helical transmembrane segment spans residues 631–651; sequence LVVLYLFSIITSFQGFLIFLW. The Cytoplasmic portion of the chain corresponds to 652–687; that stretch reads YWSMRLQARGGPSPLKSNSDSARLPISTGSTSSSRI. Residues 664–687 form a disordered region; it reads SPLKSNSDSARLPISTGSTSSSRI. Positions 666-687 are enriched in polar residues; the sequence is LKSNSDSARLPISTGSTSSSRI.

This sequence belongs to the G-protein coupled receptor 2 family. LN-TM7 subfamily. Heterodimer of 2 chains generated by proteolytic processing; the large extracellular N-terminal fragment (ADGRG1 NT) and the membrane-bound C-terminal fragment (ADGRG1-CT) predominantly remain associated and non-covalently linked. ADGRG1 NT self-associates in a trans-trans manner; the homophilic interaction enhances receptor signaling. Interacts with TGM2. Interacts with heparin; leading to the reduction of ADGRG1 shedding. Interacts with COL3A1. Part of a GPCR-tetraspanin complex at least consisting of ADGRG1, CD81, eventually CD9, and GNA11 in which CD81 is enhancing the association of ADGRG1 with GNA11. Post-translationally, autoproteolytically cleaved into 2 fragments; the large extracellular N-terminal fragment (ADGRG1 NT) and the membrane-bound C-terminal fragment (ADGRG1 CT) predominantly remain associated and non-covalently linked. Shedding to yield the secreted ADGRG1 N-terminal fragment seems to involve metalloprotease(s). Ubiquitinated. Undergoes polyubiquitination upon activation.

It localises to the cell membrane. It is found in the secreted. The protein localises to the membrane raft. With respect to regulation, forms a heterodimer of 2 chains generated by proteolytic processing that remain associated through non-covalent interactions mediated by the GAIN-B domain. In the inactivated receptor, the Stachel sequence (also named stalk) is embedded in the GAIN-B domain, where it adopts a beta-strand conformation. On activation, the Stachel moves into the 7 transmembrane region and adopts a twisted hook-shaped configuration that forms contacts within the receptor, leading to coupling of a G-alpha protein, which activates signaling. The cleaved GAIN-B and N-terminal domains can then dissociate from the rest of the receptor. Functionally, adhesion G-protein coupled receptor (aGPCR) for steroid hormone 17alpha-hydroxypregnenolone (17-OH), which is involved in cell adhesion and cell-cell interactions. Ligand binding causes a conformation change that triggers signaling via guanine nucleotide-binding proteins (G proteins) and modulates the activity of downstream effectors, such as RhoA pathway. ADGRG1 is coupled to G(12) and/or G(13) G proteins (GNA12 and GNA13, respectively) and mediates the activation Rho small GTPases. Acts as a potent suppressor of ferroptosis: binding to 17-OH-binding initiates signaling that down-regulates CD36 and alleviates ferroptosis-induced liver injury. Ligand-binding also induces cell adhesion activity via association with proteins such as collagen III/COL3A1 and TGM2. Mediates cell matrix adhesion in developing neurons and hematopoietic stem cells. Involved in cortical development, specifically in maintenance of the pial basement membrane integrity and in cortical lamination: association with COL3A1 in the developing brain inhibits neuronal migration via activation of the RhoA pathway. Together with TGM2, acts as a regulator of myelination and myelin repair in oligodendrocyte precursor cells. Acts as a hemostatic sensor of shear force: G protein-coupled receptor signaling is activated in response to shear force in platelets, promoting G(13) G protein signaling, and platelet shape change and aggregation in a COL3A1-dependent manner. Acts as an inhibitor of VEGFA production thereby inhibiting angiogenesis through a signaling pathway mediated by PRKCA. Plays a role in the maintenance of hematopoietic stem cells in bone marrow niche. Plays an essential role in testis development. This chain is Adhesion G-protein coupled receptor G1 (ADGRG1), found in Macaca mulatta (Rhesus macaque).